A 148-amino-acid polypeptide reads, in one-letter code: Large ribosomal subunit protein bL9 (148 aa).

This sequence belongs to the bacterial ribosomal protein bL9 family.

In terms of biological role, binds to the 23S rRNA. The protein is Large ribosomal subunit protein bL9 of Staphylococcus aureus (strain bovine RF122 / ET3-1).